Here is a 262-residue protein sequence, read N- to C-terminus: MSNIHPTALVADGASLHPTVTVGPYAVIGPQAVIGPGCSVGAHCVIEGRTTLGADNRIFPFACLGAAPQDKKYAGEPTQLVIGQRNTIREFCTFNRGTVQDRGLTSIGDDNWIMAYVHIAHDCVVGNQTILANNATLAGHVQVADLAIIGGLTGVHQFVKIGAHAMAGFASRIAQDVPPFMMVDGNPLAVRGLNLEGLRRRGFPAARMAGIKQMYRLLYRQGLTLEAACQAMAELPAAHPQAAADVALMRAFLAACTRGIVR.

It belongs to the transferase hexapeptide repeat family. LpxA subfamily. Homotrimer.

It is found in the cytoplasm. It carries out the reaction a (3R)-hydroxyacyl-[ACP] + UDP-N-acetyl-alpha-D-glucosamine = a UDP-3-O-[(3R)-3-hydroxyacyl]-N-acetyl-alpha-D-glucosamine + holo-[ACP]. It functions in the pathway glycolipid biosynthesis; lipid IV(A) biosynthesis; lipid IV(A) from (3R)-3-hydroxytetradecanoyl-[acyl-carrier-protein] and UDP-N-acetyl-alpha-D-glucosamine: step 1/6. Its function is as follows. Involved in the biosynthesis of lipid A, a phosphorylated glycolipid that anchors the lipopolysaccharide to the outer membrane of the cell. The polypeptide is Acyl-[acyl-carrier-protein]--UDP-N-acetylglucosamine O-acyltransferase (Verminephrobacter eiseniae (strain EF01-2)).